We begin with the raw amino-acid sequence, 348 residues long: D-erythrose-4-phosphate dehydrogenase (348 aa).

NAD(+) contacts are provided by residues 12–13 and R81; that span reads RI. Residues 154–156, R200, 213–214, and R236 contribute to the substrate site; these read SCT and TK. Catalysis depends on C155, which acts as the Nucleophile. Residue N318 participates in NAD(+) binding.

Belongs to the glyceraldehyde-3-phosphate dehydrogenase family. Epd subfamily. In terms of assembly, homotetramer.

The protein localises to the cytoplasm. The catalysed reaction is D-erythrose 4-phosphate + NAD(+) + H2O = 4-phospho-D-erythronate + NADH + 2 H(+). Its pathway is cofactor biosynthesis; pyridoxine 5'-phosphate biosynthesis; pyridoxine 5'-phosphate from D-erythrose 4-phosphate: step 1/5. Functionally, catalyzes the NAD-dependent conversion of D-erythrose 4-phosphate to 4-phosphoerythronate. This chain is D-erythrose-4-phosphate dehydrogenase, found in Salmonella gallinarum (strain 287/91 / NCTC 13346).